A 218-amino-acid polypeptide reads, in one-letter code: Adenylate kinase (218 aa).

10–15 provides a ligand contact to ATP; it reads GAGKGT. Positions 30–59 are NMP; sequence STGDMFRAAMANQTEMGRLAKSFIDKGELV. Residues threonine 31, arginine 36, 57 to 59, 86 to 89, and glutamine 93 each bind AMP; these read ELV and GYPR. The LID stretch occupies residues 127 to 165; sequence GRFICRSCGSTYHKVFNPTKVEGTCDVCGGHEFFQREDD. Arginine 128 contributes to the ATP binding site. Residues cysteine 131 and cysteine 134 each contribute to the Zn(2+) site. 137 to 138 contacts ATP; that stretch reads TY. Residues cysteine 151 and cysteine 154 each coordinate Zn(2+). AMP contacts are provided by arginine 162 and arginine 173. Residue glutamine 201 participates in ATP binding.

Belongs to the adenylate kinase family. In terms of assembly, monomer.

The protein localises to the cytoplasm. It catalyses the reaction AMP + ATP = 2 ADP. The protein operates within purine metabolism; AMP biosynthesis via salvage pathway; AMP from ADP: step 1/1. Its function is as follows. Catalyzes the reversible transfer of the terminal phosphate group between ATP and AMP. Plays an important role in cellular energy homeostasis and in adenine nucleotide metabolism. The chain is Adenylate kinase from Streptococcus thermophilus (strain CNRZ 1066).